The following is a 4690-amino-acid chain: Nonribosomal peptide synthetase sidN (4690 aa).

Residues 238–656 (ARVRENPGRI…LGRLSSDQIK (419 aa)) are adenylation 1. Residues 779–856 (SSSIPMLQSV…DLDTKAQQAL (78 aa)) form the Carrier 1 domain. An O-(pantetheine 4'-phosphoryl)serine modification is found at S816. The interval 924–1175 (APGGKAFIQH…AFGNTMSDRF (252 aa)) is condensation 1. Positions 1349–1760 (EFAQKSPNAI…GRKDDLVKIR (412 aa)) are adenylation 2. The Carrier 2 domain maps to 1889–1965 (PAWCIKHRPL…DLINHLSVKR (77 aa)). S1926 bears the O-(pantetheine 4'-phosphoryl)serine mark. A condensation 2 region spans residues 2001–2285 (PTTVFQDGML…SERLLESQLV (285 aa)). Residues 2464–2869 (TWAKTHPEWK…GRKDEQVKVR (406 aa)) form an adenylation 3 region. Residues 3002–3079 (RDLTSIEKQI…ELGRMKNALK (78 aa)) enclose the Carrier 3 domain. S3040 bears the O-(pantetheine 4'-phosphoryl)serine mark. The segment at 3121-3530 (CMPLQEVLVA…QMESLVTSFT (410 aa)) is condensation 3. Residues 3564 to 3637 (SVLEQQIRDV…KLATHIQTTS (74 aa)) form the Carrier 4 domain. O-(pantetheine 4'-phosphoryl)serine is present on S3598. Residues 3679–4087 (VYPLTPLQAG…FESIRKHPDE (409 aa)) are condensation 4. In terms of domain architecture, Carrier 5 spans 4119–4195 (SAIDQFLDPL…KLCEVAFAKS (77 aa)). S4156 bears the O-(pantetheine 4'-phosphoryl)serine mark. The condensation 5 stretch occupies residues 4262 to 4589 (WVFKAENGLD…FNAHLNILWN (328 aa)).

Belongs to the NRP synthetase family.

The protein operates within siderophore biosynthesis. Its function is as follows. Nonribosomal peptide synthetase required for the biosynthetis of epichloenin A, an extracellular siderophore that plays a crucial role in endophyte-grass symbioses. SidN assembles epichloenin A by activating and incorporating three trans-anhydromevalonylhydroxyornithine (trans-AMHO), 1 glutamine and 4 glycine moieties. Trans-AMHO is produced from L-ornithine via 2 steps involving a L-ornithine N(5)-monooxygenase and an AHMO-N(5)-transacylase that have still to be identified. The third adenylation domain (A3) of sidN incorporates the hydroxamate groups of the siderophore which forms an octahedral iron complex. The other component amino acids are assembled by sidN adenylation domains A1 and A2. The sequence is that of Nonribosomal peptide synthetase sidN from Epichloe festucae (strain Fl1).